We begin with the raw amino-acid sequence, 262 residues long: Acyl-[acyl-carrier-protein]--UDP-N-acetylglucosamine O-acyltransferase (262 aa).

This sequence belongs to the transferase hexapeptide repeat family. LpxA subfamily. As to quaternary structure, homotrimer.

Its subcellular location is the cytoplasm. It catalyses the reaction a (3R)-hydroxyacyl-[ACP] + UDP-N-acetyl-alpha-D-glucosamine = a UDP-3-O-[(3R)-3-hydroxyacyl]-N-acetyl-alpha-D-glucosamine + holo-[ACP]. Its pathway is glycolipid biosynthesis; lipid IV(A) biosynthesis; lipid IV(A) from (3R)-3-hydroxytetradecanoyl-[acyl-carrier-protein] and UDP-N-acetyl-alpha-D-glucosamine: step 1/6. Involved in the biosynthesis of lipid A, a phosphorylated glycolipid that anchors the lipopolysaccharide to the outer membrane of the cell. This is Acyl-[acyl-carrier-protein]--UDP-N-acetylglucosamine O-acyltransferase from Salmonella paratyphi B (strain ATCC BAA-1250 / SPB7).